Reading from the N-terminus, the 284-residue chain is Tropomyosin (284 aa).

A coiled-coil region spans residues 1-284 (MDAIKKKMLA…DSTFAELAGY (284 aa)). Residues 105-131 (RLQSATEKLEEASKAADESERGRKVLE) form a disordered region.

The protein belongs to the tropomyosin family. In terms of assembly, homodimer.

Its function is as follows. Tropomyosin, in association with the troponin complex, plays a central role in the calcium dependent regulation of muscle contraction. The chain is Tropomyosin from Cornu aspersum (Brown garden snail).